The following is a 445-amino-acid chain: Phosphoglucosamine mutase (445 aa).

The Phosphoserine intermediate role is filled by serine 105. Mg(2+)-binding residues include serine 105, aspartate 244, aspartate 246, and aspartate 248. Phosphoserine is present on serine 105.

Belongs to the phosphohexose mutase family. Requires Mg(2+) as cofactor. Activated by phosphorylation.

The enzyme catalyses alpha-D-glucosamine 1-phosphate = D-glucosamine 6-phosphate. In terms of biological role, catalyzes the conversion of glucosamine-6-phosphate to glucosamine-1-phosphate. The protein is Phosphoglucosamine mutase of Janthinobacterium sp. (strain Marseille) (Minibacterium massiliensis).